The chain runs to 296 residues: Ribosomal RNA small subunit methyltransferase A (296 aa).

S-adenosyl-L-methionine is bound by residues Asn28, Leu30, Gly55, Glu77, Asp103, and Asn122.

It belongs to the class I-like SAM-binding methyltransferase superfamily. rRNA adenine N(6)-methyltransferase family. RsmA subfamily.

The protein localises to the cytoplasm. The catalysed reaction is adenosine(1518)/adenosine(1519) in 16S rRNA + 4 S-adenosyl-L-methionine = N(6)-dimethyladenosine(1518)/N(6)-dimethyladenosine(1519) in 16S rRNA + 4 S-adenosyl-L-homocysteine + 4 H(+). Its function is as follows. Specifically dimethylates two adjacent adenosines (A1518 and A1519) in the loop of a conserved hairpin near the 3'-end of 16S rRNA in the 30S particle. May play a critical role in biogenesis of 30S subunits. The sequence is that of Ribosomal RNA small subunit methyltransferase A from Sinorhizobium fredii (strain NBRC 101917 / NGR234).